Consider the following 59-residue polypeptide: UPF0434 protein Shew185_1670 (59 aa).

It belongs to the UPF0434 family.

The sequence is that of UPF0434 protein Shew185_1670 from Shewanella baltica (strain OS185).